The primary structure comprises 250 residues: Flavin-dependent thymidylate synthase (250 aa).

The region spanning 7–233 (LSVELIACSS…PTVFGDFEIE (227 aa)) is the ThyX domain. Residues 92-95 (ELVR), 103-107 (QLSQR), and arginine 172 contribute to the dUMP site. FAD-binding positions include 95-97 (RHR) and glutamine 103. Positions 95–105 (RHRHFSFSQLS) match the ThyX motif motif. FAD contacts are provided by residues 188 to 190 (NFR) and histidine 194. Position 199 (arginine 199) interacts with dUMP. Arginine 199 (involved in ionization of N3 of dUMP, leading to its activation) is an active-site residue.

Belongs to the thymidylate synthase ThyX family. In terms of assembly, homotetramer. Requires FAD as cofactor.

The enzyme catalyses dUMP + (6R)-5,10-methylene-5,6,7,8-tetrahydrofolate + NADPH + H(+) = dTMP + (6S)-5,6,7,8-tetrahydrofolate + NADP(+). The protein operates within pyrimidine metabolism; dTTP biosynthesis. Functionally, catalyzes the reductive methylation of 2'-deoxyuridine-5'-monophosphate (dUMP) to 2'-deoxythymidine-5'-monophosphate (dTMP) while utilizing 5,10-methylenetetrahydrofolate (mTHF) as the methyl donor, and NADPH and FADH(2) as the reductant. This chain is Flavin-dependent thymidylate synthase, found in Corynebacterium glutamicum (strain ATCC 13032 / DSM 20300 / JCM 1318 / BCRC 11384 / CCUG 27702 / LMG 3730 / NBRC 12168 / NCIMB 10025 / NRRL B-2784 / 534).